The sequence spans 152 residues: Large ribosomal subunit protein uL24 (152 aa).

Positions 128–152 (VVEEKETSKTSEGGGKTIEETEGEK) are disordered.

The protein belongs to the universal ribosomal protein uL24 family. Part of the 50S ribosomal subunit.

Functionally, one of two assembly initiator proteins, it binds directly to the 5'-end of the 23S rRNA, where it nucleates assembly of the 50S subunit. Its function is as follows. Located at the polypeptide exit tunnel on the outside of the subunit. The chain is Large ribosomal subunit protein uL24 from Staphylothermus marinus (strain ATCC 43588 / DSM 3639 / JCM 9404 / F1).